A 699-amino-acid polypeptide reads, in one-letter code: Chitinase A1 (699 aa).

The signal sequence occupies residues 1–41; sequence MINLNKHTAFKKTAKFFLGLSLLLSVIVPSFALQPATAEAA. The region spanning 44-454 is the GH18 domain; sequence YKIVGYYPSW…NKLKADLPTG (411 aa). Residues 135-136 and 162-165 each bind chitin; these read DQ and GGWT. Glutamate 204 acts as the Proton donor in catalysis. Chitin contacts are provided by residues tyrosine 205, 277-280, and tryptophan 433; that span reads MTYD. Positions 449 to 471 are disordered; the sequence is ADLPTGGTVPPVDTTAPSVPGNA. Residues 452 to 465 show a composition bias toward low complexity; the sequence is PTGGTVPPVDTTAP. 2 Fibronectin type-III domains span residues 467–553 and 562–647; these read VPGN…TAQP and APTN…TAAE.

The protein belongs to the glycosyl hydrolase 18 family. Chitinase class II subfamily.

The catalysed reaction is Random endo-hydrolysis of N-acetyl-beta-D-glucosaminide (1-&gt;4)-beta-linkages in chitin and chitodextrins.. In Niallia circulans (Bacillus circulans), this protein is Chitinase A1 (chiA1).